A 231-amino-acid polypeptide reads, in one-letter code: Ribose-5-phosphate isomerase A (231 aa).

Residues 32-35, 85-88, and 98-101 each bind substrate; these read TGST, DGAD, and KGGG. Catalysis depends on Glu-107, which acts as the Proton acceptor. Lys-125 lines the substrate pocket.

Belongs to the ribose 5-phosphate isomerase family. In terms of assembly, homodimer.

The enzyme catalyses aldehydo-D-ribose 5-phosphate = D-ribulose 5-phosphate. It participates in carbohydrate degradation; pentose phosphate pathway; D-ribose 5-phosphate from D-ribulose 5-phosphate (non-oxidative stage): step 1/1. Functionally, catalyzes the reversible conversion of ribose-5-phosphate to ribulose 5-phosphate. The chain is Ribose-5-phosphate isomerase A from Burkholderia cenocepacia (strain ATCC BAA-245 / DSM 16553 / LMG 16656 / NCTC 13227 / J2315 / CF5610) (Burkholderia cepacia (strain J2315)).